Here is a 133-residue protein sequence, read N- to C-terminus: Ribonuclease VapC17 (133 aa).

Positions 7 and 93 each coordinate Mg(2+). The PINc domain occupies 30 to 118 (AICDIGELEW…HHDRDYKRIA (89 aa)).

Belongs to the PINc/VapC protein family. Mg(2+) is required as a cofactor.

Functionally, toxic component of a type II toxin-antitoxin (TA) system. An RNase. The cognate antitoxin is VapB17. The protein is Ribonuclease VapC17 of Mycobacterium tuberculosis (strain CDC 1551 / Oshkosh).